The primary structure comprises 603 residues: MLLSKKSASFALSAFAMLFTSVALAKEAPQAHKAVELSILHINDHHSYLEPHETRINLNGQQTKVDIGGFSAVNAKLNKLRKKYKNPLVLHAGDAITGTLYFTLFGGSADAAVMNAGNFHYFTLGNHEFDAGNEGLLKLLEPLKIPVLSANVIPDKNSILYNKWKPYDIFTVDGEKIAIIGLDTVNKTVNSSSPGKDVKFYDEIATAQIMANALKQQGINKIILLSHAGSEKNIEIAQKVNDIDVIVTGDSHYLYGNDELRSLKLPVIYEYPLEFKNPNGDPVFVMEGWAYSAVVGDLGVKFSPEGIASITRKIPHVLMSSHKLQVKNAEGKWTELTGDERKKALDTLKSMKSISLDDHDAKTDMLISKYKSEKDRLAQEIVGVITGSAMPGGSANRIPNKAGSNPEGSIATRFIAETMYNELKTVDLTIQNAGGVRADILPGNVTFNDAYTFLPFGNTLYTYKMEGSLVKQVLEDAMQFALVDGSTGAFPYGAGIRYEANETPNAEGKRLVSVEVLNKQTQQWEPIDDNKRYLVGTNAYVAGGKDGYKTFGKLFNDPKYEGVDTYLPDAESFIKFMKKHPHFEAYTSSNVKFNASTDALPKK.

The signal sequence occupies residues 1–25 (MLLSKKSASFALSAFAMLFTSVALA). Asp-44, His-46, Asp-94, Asn-126, and His-227 together coordinate Zn(2+). Substrate contacts are provided by residues Arg-397, Arg-437, Phe-456, and 540–546 (YVAGGKD).

The protein belongs to the 5'-nucleotidase family. It depends on Zn(2+) as a cofactor.

The protein localises to the periplasm. The catalysed reaction is a ribonucleoside 5'-phosphate + H2O = a ribonucleoside + phosphate. Its function is as follows. Degrades NAD into adenosine and nicotinamide riboside, the latter being subsequently internalized by a specific permease. Also endowed with NAD(P) pyrophosphatase activity. Exhibits a broad substrate specificity, recognizing either mono- or dinucleotide nicotinamides and different adenosine phosphates with a maximal activity on 5'-adenosine monophosphate. The sequence is that of NAD 5'-nucleotidase from Haemophilus influenzae (strain ATCC 51907 / DSM 11121 / KW20 / Rd).